Here is a 229-residue protein sequence, read N- to C-terminus: Large ribosomal subunit protein uL1 (229 aa).

Belongs to the universal ribosomal protein uL1 family. As to quaternary structure, part of the 50S ribosomal subunit.

Binds directly to 23S rRNA. The L1 stalk is quite mobile in the ribosome, and is involved in E site tRNA release. Functionally, protein L1 is also a translational repressor protein, it controls the translation of the L11 operon by binding to its mRNA. The protein is Large ribosomal subunit protein uL1 of Phenylobacterium zucineum (strain HLK1).